The sequence spans 393 residues: NAD(P)H-quinone oxidoreductase subunit H, chloroplastic (393 aa).

The protein belongs to the complex I 49 kDa subunit family. NDH is composed of at least 16 different subunits, 5 of which are encoded in the nucleus.

The protein localises to the plastid. The protein resides in the chloroplast thylakoid membrane. The catalysed reaction is a plastoquinone + NADH + (n+1) H(+)(in) = a plastoquinol + NAD(+) + n H(+)(out). It catalyses the reaction a plastoquinone + NADPH + (n+1) H(+)(in) = a plastoquinol + NADP(+) + n H(+)(out). Functionally, NDH shuttles electrons from NAD(P)H:plastoquinone, via FMN and iron-sulfur (Fe-S) centers, to quinones in the photosynthetic chain and possibly in a chloroplast respiratory chain. The immediate electron acceptor for the enzyme in this species is believed to be plastoquinone. Couples the redox reaction to proton translocation, and thus conserves the redox energy in a proton gradient. The sequence is that of NAD(P)H-quinone oxidoreductase subunit H, chloroplastic from Pelargonium hortorum (Common geranium).